Here is a 70-residue protein sequence, read N- to C-terminus: ATP synthase subunit epsilon, mitochondrial (70 aa).

This sequence belongs to the eukaryotic ATPase epsilon family. As to quaternary structure, F-type ATPases have 2 components, CF(1) - the catalytic core - and CF(0) - the membrane proton channel. CF(1) has five subunits: alpha(3), beta(3), gamma(1), delta(1), epsilon(1). CF(0) has three main subunits: a, b and c.

Its subcellular location is the mitochondrion. It localises to the mitochondrion inner membrane. Its function is as follows. Mitochondrial membrane ATP synthase (F(1)F(0) ATP synthase or Complex V) produces ATP from ADP in the presence of a proton gradient across the membrane which is generated by electron transport complexes of the respiratory chain. F-type ATPases consist of two structural domains, F(1) - containing the extramembraneous catalytic core, and F(0) - containing the membrane proton channel, linked together by a central stalk and a peripheral stalk. During catalysis, ATP synthesis in the catalytic domain of F(1) is coupled via a rotary mechanism of the central stalk subunits to proton translocation. Part of the complex F(1) domain and of the central stalk which is part of the complex rotary element. Rotation of the central stalk against the surrounding alpha(3)beta(3) subunits leads to hydrolysis of ATP in three separate catalytic sites on the beta subunits. In Zea mays (Maize), this protein is ATP synthase subunit epsilon, mitochondrial.